The sequence spans 372 residues: NAD(P)H-quinone oxidoreductase subunit 1 (372 aa).

8 helical membrane-spanning segments follow: residues L27–V47, V97–V117, V128–M148, A166–M186, F204–L224, V266–I286, S308–L328, and F347–P367.

Belongs to the complex I subunit 1 family. In terms of assembly, NDH-1 is composed of at least 11 different subunits.

Its subcellular location is the cellular thylakoid membrane. The enzyme catalyses a plastoquinone + NADH + (n+1) H(+)(in) = a plastoquinol + NAD(+) + n H(+)(out). The catalysed reaction is a plastoquinone + NADPH + (n+1) H(+)(in) = a plastoquinol + NADP(+) + n H(+)(out). Functionally, NDH-1 shuttles electrons from an unknown electron donor, via FMN and iron-sulfur (Fe-S) centers, to quinones in the respiratory and/or the photosynthetic chain. The immediate electron acceptor for the enzyme in this species is believed to be plastoquinone. Couples the redox reaction to proton translocation, and thus conserves the redox energy in a proton gradient. In Prochlorococcus marinus (strain NATL2A), this protein is NAD(P)H-quinone oxidoreductase subunit 1.